The primary structure comprises 297 residues: Dipicolinate synthase subunit A (297 aa).

Residues 164-165 (RT), arginine 185, threonine 203, 242-244 (LAS), and 264-267 (APGL) each bind NADP(+).

Dipicolinate synthase likely consists of DpaA and DpaB, since both proteins are required for DPA synthesis.

The enzyme catalyses (S)-2,3-dihydrodipicolinate + NADP(+) = dipicolinate + NADPH + H(+). Together with DpaB, catalyzes the conversion of dihydrodipicolinate to dipicolinate (DPA), which constitutes up to 10% of the dry weight of the spore. The chain is Dipicolinate synthase subunit A (dpaA) from Bacillus subtilis (strain 168).